The primary structure comprises 771 residues: Caldesmon (771 aa).

2 disordered regions span residues 23–91 and 104–599; these read ERLS…ALLE and LQEA…FSPK. A myosin and calmodulin-binding region spans residues 26-199; that stretch reads SYQRNDDDEE…PKEVPTEENQ (174 aa). Position 27 is a phosphotyrosine (Tyr27). Composition is skewed to basic and acidic residues over residues 47–67, 104–115, 139–155, 170–194, 203–215, 240–435, 442–484, 509–518, and 525–592; these read QERLRQKEEGDVSGEVTEKSE, LQEALERQKEFD, ITGKEEKVETRQGRCEI, WRQDGEEEGKKEEKDSEEEKPKEVP, AVEKSTDKEEVVE, AADK…ESLP, SKKD…RELT, GSEKLKEKQQ, and DELK…EKKP. 10 consecutive repeat copies span residues 251–265, 266–278, 279–291, 294–306, 309–321, 324–336, 337–349, 350–362, 363–375, and 378–390. The tract at residues 251–390 is 10 X 13 AA approximate tandem repeats; it reads EREKLEAEEK…KRAAEEKARL (140 aa). The tract at residues 523–580 is tropomyosin-binding; it reads ELDELKKRREERRKILEEEEQKKKQEEAERKIREEEEKKRMKEEIERRRAEAAEKRQK. Ser597 is subject to Phosphoserine; by CDK1. The segment at 612–644 is strong actin-binding; sequence LNKSAQKSGMKPAHTTAVVSKIDSRLEQYTSAV. The tract at residues 622–632 is tropomyosin-binding; the sequence is KPAHTTAVVSK. Residue Tyr640 is modified to Phosphotyrosine. The segment at 674–680 is calmodulin-binding; it reads WEKGNVF. Residues 676–771 are disordered; the sequence is KGNVFSSPGG…NGLRQFEKEP (96 aa). The span at 679-691 shows a compositional bias: polar residues; that stretch reads VFSSPGGTGTPNK. Ser682 carries the post-translational modification Phosphoserine; by CDK1. 2 positions are modified to phosphothreonine; by CDK1: Thr688 and Thr711. Ser717 is subject to Phosphoserine; by CDK1. Over residues 723–742 the composition is skewed to basic and acidic residues; it reads SDLRPGDVSGKRNLWEKQSV. The segment at 726–752 is weak actin-binding; sequence RPGDVSGKRNLWEKQSVEKPAASSSKV.

This sequence belongs to the caldesmon family. Phosphorylated in non-muscle cells. Phosphorylation by CDK1 during mitosis causes caldesmon to dissociate from microfilaments. Phosphorylation reduces caldesmon binding to actin, myosin, and calmodulin as well as its inhibition of actomyosin ATPase activity. Phosphorylation also occurs in both quiescent and dividing smooth muscle cells with similar effects on the interaction with actin and calmodulin and on microfilaments reorganization. In terms of tissue distribution, high-molecular-weight caldesmon (h-caldesmon) is predominantly expressed in smooth muscles, whereas low-molecular-weight caldesmon (l-caldesmon) is widely distributed in non-muscle tissues and cells. Not expressed in skeletal muscle or heart.

Its subcellular location is the cytoplasm. It is found in the cytoskeleton. It localises to the myofibril. The protein localises to the stress fiber. Actin- and myosin-binding protein implicated in the regulation of actomyosin interactions in smooth muscle and nonmuscle cells (could act as a bridge between myosin and actin filaments). Stimulates actin binding of tropomyosin which increases the stabilization of actin filament structure. In muscle tissues, inhibits the actomyosin ATPase by binding to F-actin. This inhibition is attenuated by calcium-calmodulin and is potentiated by tropomyosin. Interacts with actin, myosin, two molecules of tropomyosin and with calmodulin. Also plays an essential role during cellular mitosis and receptor capping. The sequence is that of Caldesmon (CALD1) from Gallus gallus (Chicken).